We begin with the raw amino-acid sequence, 153 residues long: Catabolic 3-dehydroquinase (153 aa).

Tyr-24 serves as the catalytic Proton acceptor. Residues Asn-75, His-81, and Asp-88 each contribute to the substrate site. Catalysis depends on His-101, which acts as the Proton donor. Substrate-binding positions include 102–103 (VS) and Arg-112.

It belongs to the type-II 3-dehydroquinase family. In terms of assembly, homododecamer. Adopts a ring-like structure, composed of an arrangement of two hexameric rings stacked on top of one another.

The enzyme catalyses 3-dehydroquinate = 3-dehydroshikimate + H2O. It participates in aromatic compound metabolism; 3,4-dihydroxybenzoate biosynthesis; 3,4-dihydroxybenzoate from 3-dehydroquinate: step 1/2. Functionally, is involved in the catabolism of quinate. Allows the utilization of quinate as carbon source via the beta-ketoadipate pathway. This Aspergillus oryzae (strain ATCC 42149 / RIB 40) (Yellow koji mold) protein is Catabolic 3-dehydroquinase.